The following is a 1009-amino-acid chain: MSWMFKRDPVWKYLQTVQYGVHGNFPRLSYPTFFPRFEFQDVIPPDDFLTSDEEVDSVLFGSLRGHVVGLRYYTGVVNNNEMVALQRDPNNPYDKNAIKVNNVNGNQVGHLKKELAGALAYIMDNKLAQIEGVVPFGANNAFTMPLHMTFWGKEENRKAVSDQLKKHGFKLGPAPKTLGFNLESGWGSGRAGPSYSMPVHAAVQMTTEQLKTEFDKLFEDLKEDDKTHEMEPAEAIETPLLPHQKQALAWMVSRENSKELPPFWEQRNDLYYNTITNFSEKDRPENVHGGILADDMGLGKTLTAIAVILTNFHDGRPLPIERVKKNLLKKEYNVNDDSMKLGGNNTSEKADGLSKDASRCSEQPSISDIKEKSKFRMSELSSSRPKRRKTAVQYIESSDSEEIETSELPQKMKGKLKNVQSETKGRAKAGSSKVIEDVAFACALTSSVPTTKKKMLKKGACAVEGSKKTDVEERPRTTLIICPLSVLSNWIDQFGQHIKSDVHLNFYVYYGPDRIREPALLSKQDIVLTTYNILTHDYGTKGDSPLHSIRWLRVILDEGHAIRNPNAQQTKAVLDLESERRWVLTGTPIQNSLKDLWSLLSFLKLKPFIDREWWHRTIQRPVTMGDEGGLRRLQSLIKNITLRRTKTSKIKGKPVLELPERKVFIQHITLSDEERKIYQSVKNEGRATIGRYFNEGTVLAHYADVLGLLLRLRQICCHTYLLTNAVSSNGPSGNDTPEELRKKLIRKMKLILSSGSDEECAICLDSLTVPVITHCAHVFCKPCICQVIQNEQPHAKCPLCRNDIHEDNLLECPPEELARDSEKKSDMEWTSSSKINALMHALTDLRKKNPNIKSLVVSQFTTFLSLIEIPLKASGFVFTRLDGSMAQKKRVESIQCFQNTEAGSPTIMLLSLKAGGVGLNLSAASRVFLMDPAWNPAAEDQCFDRCHRLGQKQEVIITKFIVKDSVEENMLKIQNKKRELAAGAFGTKKPNADEMKQAKINEIRTLIDL.

Residue arginine 27 is modified to Omega-N-methylarginine. The DNA-binding element occupies 38–287 (EFQDVIPPDD…FSEKDRPENV (250 aa)). Residue lysine 112 forms a Glycyl lysine isopeptide (Lys-Gly) (interchain with G-Cter in SUMO2) linkage. Tyrosine 195 carries the phosphotyrosine; by JAK2 modification. Lysine 211 is covalently cross-linked (Glycyl lysine isopeptide (Lys-Gly) (interchain with G-Cter in SUMO2)). 294-301 (DDMGLGKT) is an ATP binding site. The interval 336-365 (DDSMKLGGNNTSEKADGLSKDASRCSEQPS) is disordered. Basic and acidic residues predominate over residues 348–359 (EKADGLSKDASR). Serine 397, serine 398, and serine 400 each carry phosphoserine. In terms of domain architecture, Helicase ATP-binding spans 435 to 606 (IEDVAFACAL…WSLLSFLKLK (172 aa)). Residues 557–560 (DEGH) carry the DEGH box motif. At threonine 736 the chain carries Phosphothreonine. The segment at 760-801 (CAICLDSLTVPVITHCAHVFCKPCICQVIQNEQPHAKCPLCR) adopts an RING-type zinc-finger fold. One can recognise a Helicase C-terminal domain in the interval 837 to 996 (ALMHALTDLR…TKKPNADEMK (160 aa)). Residues 925 to 1009 (SRVFLMDPAW…INEIRTLIDL (85 aa)) are interaction with SP1 and SP3.

This sequence belongs to the SNF2/RAD54 helicase family. RAD16 subfamily. In terms of assembly, interacts with SP1 and SP3 independently of DNA; the interaction with these transcriptional factors may be required for basal transcription of target genes. Interacts with EGR1; the interaction requires prior binding to DNA and represses c-Rel via a DNA looping mechanism. Interacts with GATA4. Interacts with PCNA; the interaction promotes polyubiquitination of PCNA through association with the UBE2B-RAD18 and UBE2V2-UBE2N ubiquitin ligase complexes. Interacts with RAD18, SHPRH, UBE2V2 and UBE2N. In terms of tissue distribution, expressed in brain, heart, kidney, liver, lung, pancreas, placenta and skeletal muscle.

The protein localises to the cytoplasm. The protein resides in the nucleus. It localises to the nucleolus. It is found in the nucleoplasm. The enzyme catalyses S-ubiquitinyl-[E2 ubiquitin-conjugating enzyme]-L-cysteine + [acceptor protein]-L-lysine = [E2 ubiquitin-conjugating enzyme]-L-cysteine + N(6)-ubiquitinyl-[acceptor protein]-L-lysine.. It functions in the pathway protein modification; protein ubiquitination. Functionally, has both helicase and E3 ubiquitin ligase activities. Possesses intrinsic ATP-dependent nucleosome-remodeling activity; This activity may be required for transcriptional activation or repression of specific target promoters. These may include the SERPINE1 and HIV-1 promoters and the SV40 enhancer, to which this protein can bind directly. Plays a role in error-free postreplication repair (PRR) of damaged DNA and maintains genomic stability through acting as a ubiquitin ligase for 'Lys-63'-linked polyubiquitination of chromatin-bound PCNA. The polypeptide is Helicase-like transcription factor (HLTF) (Homo sapiens (Human)).